The following is a 1179-amino-acid chain: Protein turtle homolog A (1179 aa).

The signal sequence occupies residues 1 to 20; it reads MVWCLGLAVLSLVISQGADG. At 21–734 the chain is on the extracellular side; sequence RGKPEVVSVV…TQLPGLLPQP (714 aa). Ig-like domains follow at residues 24–124, 136–216, 226–318, 322–410, and 418–502; these read PEVV…DFAN, PQFQ…GSAT, PPVI…AYLT, PAQV…SPVT, and PAFI…TNVY. Intrachain disulfides connect Cys-41–Cys-108, Cys-158–Cys-206, Cys-248–Cys-301, Cys-344–Cys-395, and Cys-440–Cys-486. Residues Asn-188 and Asn-256 are each glycosylated (N-linked (GlcNAc...) asparagine). 2 consecutive Fibronectin type-III domains span residues 507–611 and 623–718; these read SPHV…TTPA and PLSP…TSGL. N-linked (GlcNAc...) asparagine glycosylation is found at Asn-513 and Asn-524. Positions 606–626 are disordered; sequence LPTTPAAPGLPPTEIPPPLSP. Positions 613–626 are enriched in pro residues; that stretch reads PGLPPTEIPPPLSP. The chain crosses the membrane as a helical span at residues 735–755; sequence VLAGVVGGVCFLGVAVLVSIL. Residues 756 to 1179 lie on the Cytoplasmic side of the membrane; it reads AGCLLNRRRA…VPHPEQATLL (424 aa). Disordered stretches follow at residues 767 to 919, 940 to 988, and 1015 to 1079; these read RRRR…PLPG, DWPP…VVGA, and AAPR…KRRN. A compositionally biased stretch (low complexity) spans 785 to 800; sequence GKSAAPSALGSGSPDS. Ser-809 is subject to Phosphoserine. Composition is skewed to pro residues over residues 826-836 and 906-919; these read TPSPHPDPPSS and VAPP…PLPG. Position 972 is a phosphothreonine (Thr-972). A PDZ-binding motif is present at residues 1177–1179; it reads TLL.

The protein belongs to the immunoglobulin superfamily. Turtle family. Interacts with MAGI2 and SHANK1.

The protein localises to the cell membrane. Its subcellular location is the synapse. Its function is as follows. Functions in dendrite outgrowth and synapse maturation. The polypeptide is Protein turtle homolog A (IGSF9) (Homo sapiens (Human)).